Here is a 528-residue protein sequence, read N- to C-terminus: MIEAPEGLIIVDTGESVDQSRKVLAEFRKISDKPIKAIVYTHFHPDHINGVKAFVSEEQVKSGEVRIYAQETLLDNVVTQGSLVGPILTMRSGYSFGVALSDEDKRDMNAGLGPLAHEGASTFIAPTDTFRDSLDTTIAGLKVQFLHVPSEAPDEIVLYLPDNRVLISAEVTQGPTLPNVHTLRGTKFRDPVVWVASLDKLRAFQADVMVPLHGQPVSGREKVEEVLRMTRDAIAYIHDQTVRWMNKGLTPDELVEKVKLPPHLAGYTPYLREYYGTVKHSVRQIYQGYLGWFQGDPVDLDPIPPAEKARRLIALMGGRDKVLMAAGDAYLKGDWQWAAELSGYAIRVDHDDKLARDIKARSFRRLGYASMNINWRNWYLMSAMELEGKLEGDVALEMSRRVRAAFLSPDMLKNLPARIFLQNWVTRIDPEKSGDVELALGFAFPDIDEAWTLEVRRGVAQLKSGIDPAVPLRLTLDKRYLDTVISGENSLLKGALLGDVKVDGNLLDIKTFLGCFDFEDAPIALTVR.

Zn(2+)-binding residues include H42, H44, D46, H47, E151, and E170. Sulfate-binding positions include 179-184 and R189; that span reads NVHTLR. H213 provides a ligand contact to Zn(2+). A sulfate-binding site is contributed by Y275.

Belongs to the metallo-beta-lactamase superfamily. Type III sulfatase family. The cofactor is Zn(2+).

The enzyme catalyses a primary linear alkyl sulfate ester + H2O = a primary alcohol + sulfate + H(+). Alkylsulfatase that cleaves the widely used detergent sodium dodecyl sulfate (SDS), which allows the bacterium to use SDS as a sole carbon or sulfur source. This chain is Linear primary-alkylsulfatase, found in Pseudomonas sp. (strain ATCC 19151).